The chain runs to 80 residues: Adipogenin (80 aa).

The helical transmembrane segment at 16-36 (FLVFWLCLPVALLLFLTIVWL) threads the bilayer. Phosphoserine is present on serine 63.

It belongs to the adipogenin family. Selectively expressed in adipose tissue where it is particularly enriched in brown adipose tissue. In adipose tissue, expressed exclusively in adipocytes and not in the stromal-vascular cell population. Expressed at much lower levels in heart, stomach and muscle and barely detected in kidney and lung.

It is found in the membrane. The protein resides in the nucleus. Its function is as follows. Plays a role in stimulating adipocyte differentiation and development. This chain is Adipogenin (Adig), found in Mus musculus (Mouse).